The primary structure comprises 726 residues: Transferrin (726 aa).

A signal peptide spans 1-16 (MLLCLTLLFSASAVLA). 2 Transferrin-like domains span residues 29–367 (YKVC…ERDT) and 374–719 (VRFC…VIRA). Disulfide bonds link Cys32–Cys63 and Cys41–Cys54. Residues Asp78 and Tyr111 each contribute to the Fe(3+) site. Intrachain disulfides connect Cys135–Cys231, Cys184–Cys210, Cys207–Cys216, and Cys274–Cys287. Hydrogencarbonate contacts are provided by Thr137, Arg141, Val143, and Gly144. Asn162 carries N-linked (GlcNAc...) asparagine glycosylation. Tyr225 lines the Fe(3+) pocket. N-linked (GlcNAc...) asparagine glycans are attached at residues Asn337 and Asn358. Intrachain disulfides connect Cys377–Cys414 and Cys387–Cys405. Fe(3+)-binding residues include Asp429 and Tyr457. Cys481 and Cys562 are disulfide-bonded. Thr483, Arg487, Ala489, and Gly490 together coordinate hydrogencarbonate. Residues Tyr573 and His642 each contribute to the Fe(3+) site.

It belongs to the transferrin family.

Its subcellular location is the secreted. In terms of biological role, transferrins are iron binding transport proteins which bind Fe(3+) ion in association with the binding of an anion, usually bicarbonate. The polypeptide is Transferrin (Blaberus discoidalis (Tropical cockroach)).